The primary structure comprises 450 residues: MSTHVTFDYSKALSFIGENELTYLRDAVKVTHHAIHEKTGAGNDFLGWVELPLQYDKEEFARIQKCAEKIKNDSDILLVVGIGGSYLGARAAIEMLNHSFYNTLSKEQRKTPQVLFVGQNISSTYMKDLMDVLEGKDFSINVISKSGTTTEPAIAFRIFRKLLEEKYGKEEARKRIYATTDKARGALKTLSDNEGYETFVIPDDVGGRFSVLTPVGLLPIAVSGLNIEEMMKGAAAGHNDFAKSELEENPAYQYAVVRNALYNKGKTIEMLVNYEPALHYFSEWWKQLFGESEGKDQKGIFPSSANFSTDLHSLGQYIQEGRRDLFETVLKVGKSTHELKIELDDNDLDGLNYLAGETIDFVNTKAYEGTLLAHSDGGVPNLIVNIPELNEYTFGYLVYFFEKACAMSGYLLGVNPFDQPGVEAYKKNMFALLGKPGFEELKAELEERLK.

Phosphothreonine is present on threonine 39. Glutamate 291 serves as the catalytic Proton donor. Active-site residues include histidine 312 and lysine 426.

The protein belongs to the GPI family.

Its subcellular location is the cytoplasm. The enzyme catalyses alpha-D-glucose 6-phosphate = beta-D-fructose 6-phosphate. It participates in carbohydrate biosynthesis; gluconeogenesis. It functions in the pathway carbohydrate degradation; glycolysis; D-glyceraldehyde 3-phosphate and glycerone phosphate from D-glucose: step 2/4. Catalyzes the reversible isomerization of glucose-6-phosphate to fructose-6-phosphate. This chain is Glucose-6-phosphate isomerase, found in Bacillus mycoides (strain KBAB4) (Bacillus weihenstephanensis).